Here is a 60-residue protein sequence, read N- to C-terminus: Large ribosomal subunit protein bL32 (60 aa).

A compositionally biased stretch (basic residues) spans 1–16; sequence MAVPKRKTSPSKRGMR. Positions 1–60 are disordered; it reads MAVPKRKTSPSKRGMRRSADALKAPTYVEDKNSGEMRRPHHIDLKTGMYRGRQVLTPKES. Basic and acidic residues predominate over residues 28-44; the sequence is VEDKNSGEMRRPHHIDL.

This sequence belongs to the bacterial ribosomal protein bL32 family.

The chain is Large ribosomal subunit protein bL32 from Mesorhizobium japonicum (strain LMG 29417 / CECT 9101 / MAFF 303099) (Mesorhizobium loti (strain MAFF 303099)).